The primary structure comprises 360 residues: N-acetylmuramoyl-L-alanine amidase CwlL (360 aa).

An N-terminal signal peptide occupies residues methionine 1–alanine 39. The N-acetylmuramoyl-L-alanine amidase domain maps to leucine 40 to proline 154. 4 consecutive repeat copies span residues arginine 166–serine 191, leucine 196–leucine 259, lysine 265–serine 289, and leucine 291–leucine 355. 2 2 X approximate repeats regions span residues arginine 166–serine 289 and leucine 196–leucine 355.

It belongs to the N-acetylmuramoyl-L-alanine amidase 2 family.

It is found in the secreted. It carries out the reaction Hydrolyzes the link between N-acetylmuramoyl residues and L-amino acid residues in certain cell-wall glycopeptides.. The sequence is that of N-acetylmuramoyl-L-alanine amidase CwlL (cwlL) from Bacillus licheniformis.